A 221-amino-acid chain; its full sequence is Mediator of RNA polymerase II transcription subunit 19a (221 aa).

The disordered stretch occupies residues 101–221 (PVELPPAEKG…DEVGAIRVAG (121 aa)). A compositionally biased stretch (basic residues) spans 142–152 (EHKKHKHKHKD). A compositionally biased stretch (basic and acidic residues) spans 153-178 (RSKDKDKDKDRDRKKDKNGHHDSGDH). The segment covering 179-188 (SKKHHDKKRK) has biased composition (basic residues).

It belongs to the plant Mediator complex subunit 19 family. Component of the Mediator complex. Interacts with FIB2.

The protein localises to the nucleus. Functionally, component of the Mediator complex, a coactivator involved in the regulated transcription of nearly all RNA polymerase II-dependent genes. Mediator functions as a bridge to convey information from gene-specific regulatory proteins to the basal RNA polymerase II transcription machinery. The Mediator complex, having a compact conformation in its free form, is recruited to promoters by direct interactions with regulatory proteins and serves for the assembly of a functional preinitiation complex with RNA polymerase II and the general transcription factors. This Arabidopsis thaliana (Mouse-ear cress) protein is Mediator of RNA polymerase II transcription subunit 19a (MED19A).